A 152-amino-acid chain; its full sequence is Protein FERTILITY RESTORER RF2, mitochondrial (152 aa).

The N-terminal 52 residues, 1–52, are a transit peptide targeting the mitochondrion; it reads MSTLVTCSLPGAVTTHASTRRFGGSQFQTSQASCISFKREVSAKAVLRSVRC. Over residues 52–69 the composition is skewed to polar residues; that stretch reads CNATQTQSAQRKSSTATV. A disordered region spans residues 52 to 101; that stretch reads CNATQTQSAQRKSSTATVKRSDPKGKTQGPKLDDGSGGFPPFRFGKGGGG.

It localises to the mitochondrion. In terms of biological role, non-functional allele of the RF2 fertility restorer of rice varieties with LD-type cytoplasmic male sterility (CMS). Non-functional RF2 alleles are found in japonica cultivars Taichung 65 and Nipponbare (AC F1SZ44), and is due to the presence of Thr-78 which replaces Ile-78 in the functional allele. Functional allele is found in the japonica cultivars Fukuyama and Owarihatamochi (AC F1SZ42), and indica cultivar Kasalath (AC F1SZ41). The protein is Protein FERTILITY RESTORER RF2, mitochondrial of Oryza sativa subsp. japonica (Rice).